We begin with the raw amino-acid sequence, 216 residues long: Cell division protein SepF (216 aa).

The disordered stretch occupies residues 22–126 (EYVEEPDQAR…PVVDDGGPLA (105 aa)). Composition is skewed to basic and acidic residues over residues 28 to 50 (DQAR…REFV), 62 to 80 (SRRD…RPRV), and 106 to 118 (ARAE…RAPV).

It belongs to the SepF family. Homodimer. Interacts with FtsZ.

It localises to the cytoplasm. Functionally, cell division protein that is part of the divisome complex and is recruited early to the Z-ring. Probably stimulates Z-ring formation, perhaps through the cross-linking of FtsZ protofilaments. Its function overlaps with FtsA. The polypeptide is Cell division protein SepF (Rhodococcus erythropolis (strain PR4 / NBRC 100887)).